Here is a 238-residue protein sequence, read N- to C-terminus: Ubiquinone/menaquinone biosynthesis C-methyltransferase UbiE (238 aa).

S-adenosyl-L-methionine-binding residues include T62 and D82.

It belongs to the class I-like SAM-binding methyltransferase superfamily. MenG/UbiE family.

The enzyme catalyses a 2-demethylmenaquinol + S-adenosyl-L-methionine = a menaquinol + S-adenosyl-L-homocysteine + H(+). The catalysed reaction is a 2-methoxy-6-(all-trans-polyprenyl)benzene-1,4-diol + S-adenosyl-L-methionine = a 5-methoxy-2-methyl-3-(all-trans-polyprenyl)benzene-1,4-diol + S-adenosyl-L-homocysteine + H(+). It participates in quinol/quinone metabolism; menaquinone biosynthesis; menaquinol from 1,4-dihydroxy-2-naphthoate: step 2/2. The protein operates within cofactor biosynthesis; ubiquinone biosynthesis. Functionally, methyltransferase required for the conversion of demethylmenaquinol (DMKH2) to menaquinol (MKH2) and the conversion of 2-polyprenyl-6-methoxy-1,4-benzoquinol (DDMQH2) to 2-polyprenyl-3-methyl-6-methoxy-1,4-benzoquinol (DMQH2). This chain is Ubiquinone/menaquinone biosynthesis C-methyltransferase UbiE, found in Wolbachia pipientis wMel.